Consider the following 130-residue polypeptide: Large ribosomal subunit protein bL20c (130 aa).

The protein belongs to the bacterial ribosomal protein bL20 family.

The protein resides in the plastid. It is found in the chloroplast. Its function is as follows. Binds directly to 23S ribosomal RNA and is necessary for the in vitro assembly process of the 50S ribosomal subunit. It is not involved in the protein synthesizing functions of that subunit. In Oenothera argillicola (Appalachian evening primrose), this protein is Large ribosomal subunit protein bL20c.